The primary structure comprises 610 residues: Methionine--tRNA ligase (610 aa).

The 'HIGH' region motif lies at 12–22; it reads PYANGPRHIGH. Zn(2+) is bound by residues C144, C147, C157, and C160. Residues 348 to 352 carry the 'KMSKS' region motif; it reads KFSSS. S351 serves as a coordination point for ATP.

This sequence belongs to the class-I aminoacyl-tRNA synthetase family. MetG type 1 subfamily. Monomer. Zn(2+) serves as cofactor.

The protein resides in the cytoplasm. The enzyme catalyses tRNA(Met) + L-methionine + ATP = L-methionyl-tRNA(Met) + AMP + diphosphate. Its function is as follows. Is required not only for elongation of protein synthesis but also for the initiation of all mRNA translation through initiator tRNA(fMet) aminoacylation. The chain is Methionine--tRNA ligase from Corynebacterium glutamicum (strain R).